The primary structure comprises 416 residues: RNA polymerase sigma-C factor (416 aa).

Positions 205 to 218 (DLVQEGTLGLERAV) match the Polymerase core binding motif. Residues 374 to 393 (LAEIGRALDLSRERVRQIES) constitute a DNA-binding region (H-T-H motif).

The protein belongs to the sigma-70 factor family.

Its function is as follows. Sigma factors are initiation factors that promote the attachment of RNA polymerase to specific initiation sites and are then released. The protein is RNA polymerase sigma-C factor (sigC) of Nostoc sp. (strain PCC 7120 / SAG 25.82 / UTEX 2576).